A 166-amino-acid chain; its full sequence is Endoribonuclease YbeY (166 aa).

Positions 132, 136, and 142 each coordinate Zn(2+).

It belongs to the endoribonuclease YbeY family. Zn(2+) serves as cofactor.

It localises to the cytoplasm. Single strand-specific metallo-endoribonuclease involved in late-stage 70S ribosome quality control and in maturation of the 3' terminus of the 16S rRNA. This is Endoribonuclease YbeY from Clostridium botulinum (strain ATCC 19397 / Type A).